Here is a 316-residue protein sequence, read N- to C-terminus: Phospholipase A1 3 (316 aa).

Positions 1–4 (ADDL) are cleaved as a signal peptide. Positions 5 to 14 (TTLRNGTLDR) are excised as a propeptide. Cysteine 20 and cysteine 103 are disulfide-bonded. The active-site Nucleophile is serine 153. The active-site Charge relay system is the aspartate 181. Disulfide bonds link cysteine 192-cysteine 197 and cysteine 235-cysteine 240. The active-site Charge relay system is the histidine 242. Intrachain disulfides connect cysteine 257–cysteine 284, cysteine 258–cysteine 309, and cysteine 277–cysteine 282.

It belongs to the AB hydrolase superfamily. Lipase family. In terms of tissue distribution, expressed by the venom gland.

The protein resides in the secreted. It carries out the reaction a 1,2-diacyl-sn-glycero-3-phosphocholine + H2O = a 2-acyl-sn-glycero-3-phosphocholine + a fatty acid + H(+). Its function is as follows. Catalyzes the hydrolysis of phosphatidylcholine with phospholipase A1 activity. May act as an allergen and induce hemolytic activity. The sequence is that of Phospholipase A1 3 from Polistes dominula (European paper wasp).